Here is a 258-residue protein sequence, read N- to C-terminus: 1-(5-phosphoribosyl)-5-[(5-phosphoribosylamino)methylideneamino] imidazole-4-carboxamide isomerase 2 (258 aa).

Residue D14 is the Proton acceptor of the active site. The Proton donor role is filled by D140.

This sequence belongs to the HisA/HisF family.

Its subcellular location is the cytoplasm. It carries out the reaction 1-(5-phospho-beta-D-ribosyl)-5-[(5-phospho-beta-D-ribosylamino)methylideneamino]imidazole-4-carboxamide = 5-[(5-phospho-1-deoxy-D-ribulos-1-ylimino)methylamino]-1-(5-phospho-beta-D-ribosyl)imidazole-4-carboxamide. It functions in the pathway amino-acid biosynthesis; L-histidine biosynthesis; L-histidine from 5-phospho-alpha-D-ribose 1-diphosphate: step 4/9. The protein is 1-(5-phosphoribosyl)-5-[(5-phosphoribosylamino)methylideneamino] imidazole-4-carboxamide isomerase 2 (hisA2) of Photorhabdus laumondii subsp. laumondii (strain DSM 15139 / CIP 105565 / TT01) (Photorhabdus luminescens subsp. laumondii).